We begin with the raw amino-acid sequence, 352 residues long: Holliday junction branch migration complex subunit RuvB (352 aa).

The segment at 4 to 185 (PDRLISAVSG…FGIVQRLEFY (182 aa)) is large ATPase domain (RuvB-L). ATP-binding positions include Ile24, Arg25, Gly66, Lys69, Thr70, Thr71, 132–134 (EDF), Arg175, Tyr185, and Arg222. Thr70 is a binding site for Mg(2+). Positions 186-256 (NVEDLATIVS…IADKALNLLD (71 aa)) are small ATPAse domain (RuvB-S). Positions 259–352 (ERGFDHLDRR…SDLFTSEDGN (94 aa)) are head domain (RuvB-H). The DNA site is built by Arg295, Arg314, and Arg319.

The protein belongs to the RuvB family. In terms of assembly, homohexamer. Forms an RuvA(8)-RuvB(12)-Holliday junction (HJ) complex. HJ DNA is sandwiched between 2 RuvA tetramers; dsDNA enters through RuvA and exits via RuvB. An RuvB hexamer assembles on each DNA strand where it exits the tetramer. Each RuvB hexamer is contacted by two RuvA subunits (via domain III) on 2 adjacent RuvB subunits; this complex drives branch migration. In the full resolvosome a probable DNA-RuvA(4)-RuvB(12)-RuvC(2) complex forms which resolves the HJ.

Its subcellular location is the cytoplasm. It carries out the reaction ATP + H2O = ADP + phosphate + H(+). In terms of biological role, the RuvA-RuvB-RuvC complex processes Holliday junction (HJ) DNA during genetic recombination and DNA repair, while the RuvA-RuvB complex plays an important role in the rescue of blocked DNA replication forks via replication fork reversal (RFR). RuvA specifically binds to HJ cruciform DNA, conferring on it an open structure. The RuvB hexamer acts as an ATP-dependent pump, pulling dsDNA into and through the RuvAB complex. RuvB forms 2 homohexamers on either side of HJ DNA bound by 1 or 2 RuvA tetramers; 4 subunits per hexamer contact DNA at a time. Coordinated motions by a converter formed by DNA-disengaged RuvB subunits stimulates ATP hydrolysis and nucleotide exchange. Immobilization of the converter enables RuvB to convert the ATP-contained energy into a lever motion, pulling 2 nucleotides of DNA out of the RuvA tetramer per ATP hydrolyzed, thus driving DNA branch migration. The RuvB motors rotate together with the DNA substrate, which together with the progressing nucleotide cycle form the mechanistic basis for DNA recombination by continuous HJ branch migration. Branch migration allows RuvC to scan DNA until it finds its consensus sequence, where it cleaves and resolves cruciform DNA. In Pseudomonas paraeruginosa (strain DSM 24068 / PA7) (Pseudomonas aeruginosa (strain PA7)), this protein is Holliday junction branch migration complex subunit RuvB.